Reading from the N-terminus, the 91-residue chain is Small ribosomal subunit protein uS15 (91 aa).

The protein belongs to the universal ribosomal protein uS15 family. In terms of assembly, part of the 30S ribosomal subunit. Forms a bridge to the 50S subunit in the 70S ribosome, contacting the 23S rRNA.

Its function is as follows. One of the primary rRNA binding proteins, it binds directly to 16S rRNA where it helps nucleate assembly of the platform of the 30S subunit by binding and bridging several RNA helices of the 16S rRNA. In terms of biological role, forms an intersubunit bridge (bridge B4) with the 23S rRNA of the 50S subunit in the ribosome. This chain is Small ribosomal subunit protein uS15, found in Rickettsia bellii (strain OSU 85-389).